A 370-amino-acid polypeptide reads, in one-letter code: Phosphate-binding protein PstS2 (370 aa).

The N-terminal stretch at 1-22 (MKFARSGAAVSLLAAGTLVLTA) is a signal peptide. The N-palmitoyl cysteine moiety is linked to residue Cys23. Cys23 carries S-diacylglycerol cysteine lipidation. Residues 54–56 (STA), Ser84, Asp102, and 191–193 (SGT) each bind phosphate.

Belongs to the PstS family. The complex is composed of two ATP-binding proteins (PstB), two transmembrane proteins (PstC and PstA) and a solute-binding protein (PstS).

It localises to the cell membrane. Its subcellular location is the secreted. Functionally, functions in inorganic phosphate uptake, a phosphate-binding protein, although probably not the main uptake protein under phosphate starvation. Part of the ABC transporter complex PstSACB involved in phosphate import. The polypeptide is Phosphate-binding protein PstS2 (pstS2) (Mycobacterium bovis (strain BCG / Pasteur 1173P2)).